The primary structure comprises 126 residues: Small ribosomal subunit protein uS12 (126 aa).

Residues 1–16 are compositionally biased toward polar residues; sequence MPTVNQLVRQGRTMNK. Residues 1–24 are disordered; that stretch reads MPTVNQLVRQGRTMNKTKTKSPAL. Aspartate 89 is modified (3-methylthioaspartic acid).

Belongs to the universal ribosomal protein uS12 family. In terms of assembly, part of the 30S ribosomal subunit. Contacts proteins S8 and S17. May interact with IF1 in the 30S initiation complex.

With S4 and S5 plays an important role in translational accuracy. Its function is as follows. Interacts with and stabilizes bases of the 16S rRNA that are involved in tRNA selection in the A site and with the mRNA backbone. Located at the interface of the 30S and 50S subunits, it traverses the body of the 30S subunit contacting proteins on the other side and probably holding the rRNA structure together. The combined cluster of proteins S8, S12 and S17 appears to hold together the shoulder and platform of the 30S subunit. The chain is Small ribosomal subunit protein uS12 from Elusimicrobium minutum (strain Pei191).